A 258-amino-acid polypeptide reads, in one-letter code: MSESRTSADGGMETSYGFREVPGGEKQGLVNQVFHKVAKRYDIMNDVMSMGMHRVWKDAMIAALNPRKEPGYKVLDVAGGTGDIAFRIVEASGRQAHATVLDINGSMLGVGAERAEKKKLSANLTFVEANAEELPFEAASFDAYTIAFGIRNVPRIDVALAEAYRVLKRGGRLLVLEFSEVDMPLLDKIYDAWSFNAIPQFGKAITGDAEPYQYLVESIRKFPNQENFAAMIRQAGFSRVSHTNYTGGIAALHSGWKL.

The segment at 1-20 (MSESRTSADGGMETSYGFRE) is disordered. Residues threonine 81, aspartate 102, and 130–131 (NA) contribute to the S-adenosyl-L-methionine site.

The protein belongs to the class I-like SAM-binding methyltransferase superfamily. MenG/UbiE family.

It carries out the reaction a 2-demethylmenaquinol + S-adenosyl-L-methionine = a menaquinol + S-adenosyl-L-homocysteine + H(+). The catalysed reaction is a 2-methoxy-6-(all-trans-polyprenyl)benzene-1,4-diol + S-adenosyl-L-methionine = a 5-methoxy-2-methyl-3-(all-trans-polyprenyl)benzene-1,4-diol + S-adenosyl-L-homocysteine + H(+). It participates in quinol/quinone metabolism; menaquinone biosynthesis; menaquinol from 1,4-dihydroxy-2-naphthoate: step 2/2. The protein operates within cofactor biosynthesis; ubiquinone biosynthesis. Methyltransferase required for the conversion of demethylmenaquinol (DMKH2) to menaquinol (MKH2) and the conversion of 2-polyprenyl-6-methoxy-1,4-benzoquinol (DDMQH2) to 2-polyprenyl-3-methyl-6-methoxy-1,4-benzoquinol (DMQH2). This Rhizobium etli (strain CIAT 652) protein is Ubiquinone/menaquinone biosynthesis C-methyltransferase UbiE.